We begin with the raw amino-acid sequence, 247 residues long: uncharacterized protein (247 aa).

Residues 200-225 (SGKYSELKTKVNDIENDLRTLSSNTN) adopt a coiled-coil conformation.

This is an uncharacterized protein from Acanthamoeba polyphaga (Amoeba).